Reading from the N-terminus, the 307-residue chain is Homoserine O-acetyltransferase (307 aa).

The Acyl-thioester intermediate role is filled by Cys142. Residues Lys163 and Ser192 each contribute to the substrate site. The Proton acceptor role is filled by His235. Residue Glu237 is part of the active site. Position 249 (Arg249) interacts with substrate.

Belongs to the MetA family.

The protein resides in the cytoplasm. The enzyme catalyses L-homoserine + acetyl-CoA = O-acetyl-L-homoserine + CoA. It functions in the pathway amino-acid biosynthesis; L-methionine biosynthesis via de novo pathway; O-acetyl-L-homoserine from L-homoserine: step 1/1. In terms of biological role, transfers an acetyl group from acetyl-CoA to L-homoserine, forming acetyl-L-homoserine. This chain is Homoserine O-acetyltransferase, found in Sinorhizobium fredii (strain NBRC 101917 / NGR234).